A 153-amino-acid polypeptide reads, in one-letter code: Mitochondrial fission 1 protein (153 aa).

The Cytoplasmic portion of the chain corresponds to 1–124 (MTQLPYAVDA…LIDDKVTKEG (124 aa)). Residues 73-106 (RECLYYLALGNYKLGNYAQARKYNDALLENEPAN) form a TPR repeat. Residues 125-145 (LMGVAIISGVAVAAGVIGGVL) form a helical membrane-spanning segment. Residues 146 to 153 (LRNLGRKR) lie on the Mitochondrial intermembrane side of the membrane.

Belongs to the FIS1 family.

It is found in the mitochondrion outer membrane. Its function is as follows. Has a role in mitochondrial fission. Has a role in outer membrane fission but not matrix separation. This is Mitochondrial fission 1 protein (mtp-2) from Neurospora crassa (strain ATCC 24698 / 74-OR23-1A / CBS 708.71 / DSM 1257 / FGSC 987).